Consider the following 190-residue polypeptide: UPF0301 protein TC_0483 (190 aa).

The protein belongs to the UPF0301 (AlgH) family.

This chain is UPF0301 protein TC_0483, found in Chlamydia muridarum (strain MoPn / Nigg).